The chain runs to 50 residues: Major pollen allergen Ole e 6 (50 aa).

Cystine bridges form between C8-C34, C12-C30, and C16-C26.

In terms of tissue distribution, expressed in pollen.

This Olea europaea (Common olive) protein is Major pollen allergen Ole e 6 (OLE6).